Consider the following 397-residue polypeptide: Methyltransferase/ribosomally synthesized type I borosin cyclic peptide precursor mroMa1 (397 aa).

Residues 1–246 (MALKKPGSLT…TTSTFYVPPR (246 aa)) form a methyltransferase domain region. Catalysis depends on residues Arg70, Tyr74, and Tyr96. S-adenosyl-L-methionine-binding residues include Tyr96, His98, Val101, Ala128, Gln170, Gly208, Ser239, and Thr240. The segment at 247-365 (TPAPIDPKAV…GPIFVVMRQL (119 aa)) is clasp domain. The interval 366–388 (PSAIASGQEPSQEEIARADDATA) is precursor leader. 2 positions are modified to N-methylisoleucine: Ile391 and Ile392. Tyr393 is subject to N-methyltyrosine. The residue at position 394 (Ile394) is an N-methylisoleucine. At Val395 the chain carries N-methylvaline.

In the N-terminal section; belongs to the precorrin methyltransferase family. Homodimer. In terms of processing, mroMA automethylates at Ile-391, Ile-392, Tyr-393, Ile-394 and Val-395 before being processed by the a prolyloligopeptidase which likely forms a peptidyl ester upon removal of the follower propeptide, which then undergoes macrocyclization with the N-terminus of the modified core peptide. Peptide backbone alpha-N-methylations change the physicochemical properties of amide bonds to provide structural constraints and other favorable characteristics including biological membrane permeability to peptides.

It participates in secondary metabolite biosynthesis. Fusion protein of the methyltransferase mroM1 and a type I borosin core peptide; part of the gene cluster that mediates the biosynthesis of a type I borosin, a highly methylated cyclic peptide with potent biological activities. Type I borosins derive from the C-terminus of the fusion protein, and it is the same protein that methylates its own C-terminus using S-adenosyl methionine (SAM). The C-terminus is subsequently cleaved off and macrocyclized by a prolyloligopeptidase to give the final product. In Mycena rosella (Pink bonnet), this protein is Methyltransferase/ribosomally synthesized type I borosin cyclic peptide precursor mroMa1.